The sequence spans 174 residues: NADH-ubiquinone oxidoreductase chain 6 (174 aa).

A run of 6 helical transmembrane segments spans residues 1-21 (MTYA…GFSS), 24-44 (SPIY…AVIL), 47-67 (GGGY…MVVF), 86-106 (AEVL…VLWV), 111-131 (GVVV…EGEG), and 151-171 (WLVV…IEIA).

This sequence belongs to the complex I subunit 6 family. Core subunit of respiratory chain NADH dehydrogenase (Complex I) which is composed of 45 different subunits.

It is found in the mitochondrion inner membrane. The enzyme catalyses a ubiquinone + NADH + 5 H(+)(in) = a ubiquinol + NAD(+) + 4 H(+)(out). Functionally, core subunit of the mitochondrial membrane respiratory chain NADH dehydrogenase (Complex I) which catalyzes electron transfer from NADH through the respiratory chain, using ubiquinone as an electron acceptor. Essential for the catalytic activity and assembly of complex I. This Pongo pygmaeus (Bornean orangutan) protein is NADH-ubiquinone oxidoreductase chain 6 (MT-ND6).